We begin with the raw amino-acid sequence, 316 residues long: Probable porphobilinogen deaminase (316 aa).

Residue C234 is modified to S-(dipyrrolylmethanemethyl)cysteine.

The protein belongs to the HMBS family. Dipyrromethane serves as cofactor.

The catalysed reaction is 4 porphobilinogen + H2O = hydroxymethylbilane + 4 NH4(+). The protein operates within porphyrin-containing compound metabolism; protoporphyrin-IX biosynthesis; coproporphyrinogen-III from 5-aminolevulinate: step 2/4. In terms of biological role, tetrapolymerization of the monopyrrole PBG into the hydroxymethylbilane pre-uroporphyrinogen in several discrete steps. The polypeptide is Probable porphobilinogen deaminase (Methanosarcina mazei (strain ATCC BAA-159 / DSM 3647 / Goe1 / Go1 / JCM 11833 / OCM 88) (Methanosarcina frisia)).